A 184-amino-acid polypeptide reads, in one-letter code: Signal peptidase I S (184 aa).

The Cytoplasmic segment spans residues 1 to 18; that stretch reads MKSENVSKKKSILEWAKA. A helical membrane pass occupies residues 19–39; it reads IVIAVVLALLIRNFIFAPYVV. Residues 40-184 lie on the Extracellular side of the membrane; that stretch reads DGDSMYPTLH…YPFNEMRKTN (145 aa). Active-site residues include S43 and K83.

This sequence belongs to the peptidase S26 family.

The protein localises to the cell membrane. It catalyses the reaction Cleavage of hydrophobic, N-terminal signal or leader sequences from secreted and periplasmic proteins.. In terms of biological role, not essential for cell viability, but required for efficient secretion of many proteins. The protein is Signal peptidase I S (sipS) of Bacillus subtilis (strain 168).